A 221-amino-acid polypeptide reads, in one-letter code: Proteasome subunit beta type-1 (221 aa).

Belongs to the peptidase T1B family. The 26S proteasome consists of a 20S proteasome core and two 19S regulatory subunits. The 20S proteasome core is composed of 28 subunits that are arranged in four stacked rings, resulting in a barrel-shaped structure. The two end rings are each formed by seven alpha subunits, and the two central rings are each formed by seven beta subunits. The catalytic chamber with the active sites is on the inside of the barrel.

Its subcellular location is the cytoplasm. The protein localises to the nucleus. Its function is as follows. Non-catalytic component of the proteasome, a multicatalytic proteinase complex which is characterized by its ability to cleave peptides with Arg, Phe, Tyr, Leu, and Glu adjacent to the leaving group at neutral or slightly basic pH. The proteasome has an ATP-dependent proteolytic activity. The chain is Proteasome subunit beta type-1 (PBF1) from Oryza sativa subsp. japonica (Rice).